A 315-amino-acid polypeptide reads, in one-letter code: Homoserine kinase (315 aa).

96–106 (PHSRGLGSSAA) contributes to the ATP binding site.

This sequence belongs to the GHMP kinase family. Homoserine kinase subfamily.

It localises to the cytoplasm. It carries out the reaction L-homoserine + ATP = O-phospho-L-homoserine + ADP + H(+). It participates in amino-acid biosynthesis; L-threonine biosynthesis; L-threonine from L-aspartate: step 4/5. Its function is as follows. Catalyzes the ATP-dependent phosphorylation of L-homoserine to L-homoserine phosphate. This chain is Homoserine kinase, found in Mycolicibacterium paratuberculosis (strain ATCC BAA-968 / K-10) (Mycobacterium paratuberculosis).